We begin with the raw amino-acid sequence, 243 residues long: Zinc import ATP-binding protein ZnuC 2 (243 aa).

Positions 3-218 constitute an ABC transporter domain; that stretch reads LSLHQLSVKF…PEYKVLFGLD (216 aa). 35–42 contributes to the ATP binding site; sequence GPNGSGKS.

Belongs to the ABC transporter superfamily. Zinc importer (TC 3.A.1.15.5) family. As to quaternary structure, the complex is composed of two ATP-binding proteins (ZnuC), two transmembrane proteins (ZnuB) and a solute-binding protein (ZnuA).

The protein resides in the cell inner membrane. It catalyses the reaction Zn(2+)(out) + ATP(in) + H2O(in) = Zn(2+)(in) + ADP(in) + phosphate(in) + H(+)(in). Part of the ABC transporter complex ZnuABC involved in zinc import. Responsible for energy coupling to the transport system. The chain is Zinc import ATP-binding protein ZnuC 2 from Aliivibrio fischeri (strain ATCC 700601 / ES114) (Vibrio fischeri).